The sequence spans 311 residues: Probable inactive peptidyl-prolyl cis-trans isomerase-like 6 (311 aa).

A PPIase cyclophilin-type domain is found at 145-308 (FLDICIDSSP…HMCRITDSGD (164 aa)).

This sequence belongs to the cyclophilin-type PPIase family.

Its function is as follows. Probable inactive PPIase with no peptidyl-prolyl cis-trans isomerase activity. The protein is Probable inactive peptidyl-prolyl cis-trans isomerase-like 6 of Homo sapiens (Human).